We begin with the raw amino-acid sequence, 708 residues long: Leukotoxin translocation ATP-binding protein LktB (708 aa).

Residues M1–V126 enclose the Peptidase C39 domain. The region spanning F155–Q437 is the ABC transmembrane type-1 domain. 5 helical membrane-spanning segments follow: residues L159 to V179, L192 to L212, A270 to Y290, L296 to L316, and V389 to G409. Residues I469 to Q704 form the ABC transporter domain. An ATP-binding site is contributed by G503–S510.

This sequence belongs to the ABC transporter superfamily. Protein-1 exporter (TC 3.A.1.109) family. In terms of assembly, homodimer.

It localises to the cell inner membrane. The catalysed reaction is ATP + H2O + proteinSide 1 = ADP + phosphate + proteinSide 2.. In terms of biological role, part of the ABC transporter complex LktBD involved in leukotoxin export. Transmembrane domains (TMD) form a pore in the inner membrane and the ATP-binding domain (NBD) is responsible for energy generation. In Mannheimia haemolytica (Pasteurella haemolytica), this protein is Leukotoxin translocation ATP-binding protein LktB (lktB).